A 142-amino-acid chain; its full sequence is Large ribosomal subunit protein uL13 (142 aa).

The protein belongs to the universal ribosomal protein uL13 family. As to quaternary structure, part of the 50S ribosomal subunit.

Its function is as follows. This protein is one of the early assembly proteins of the 50S ribosomal subunit, although it is not seen to bind rRNA by itself. It is important during the early stages of 50S assembly. The chain is Large ribosomal subunit protein uL13 from Aeromonas salmonicida (strain A449).